A 296-amino-acid chain; its full sequence is PYK10-binding protein 2 (296 aa).

Positions 1–20 are disordered; sequence MAQKVEAKGGKGGNQWDDGS. Position 2 is an N-acetylalanine (A2). Jacalin-type lectin domains lie at 2–142 and 150–293; these read AQKV…YFAP and AKPL…HVRP.

It belongs to the jacalin lectin family. As to quaternary structure, component of the PYK10 complex, at least composed of PYK10/BGLU23, BGLU21, BGLU22, JAL22, JAL23, PBP1/JAL30, PBP2/JAL31, JAL32, JAL33, JAL34, JAL35, GLL22 and GLL23.

Polymerizer-type lectin that may facilitate the correct polymerization of BGLU23/PYK10 upon tissue damage. Activates BGLU21, BGLU22 and BGLU23. The protein is PYK10-binding protein 2 (PBP2) of Arabidopsis thaliana (Mouse-ear cress).